A 157-amino-acid chain; its full sequence is Protein UXT (157 aa).

Belongs to the UXT family. In terms of assembly, homohexamer. Component of the PAQosome complex which is responsible for the biogenesis of several protein complexes and which consists of R2TP complex members RUVBL1, RUVBL2, RPAP3 and PIH1D1, URI complex members PFDN2, PFDN6, PDRG1, UXT and URI1 as well as ASDURF, POLR2E and DNAAF10/WDR92. Interacts with LRPPRC. Interacts with androgen receptor AR (via N-terminus). Interacts with estrogen receptor ESR1; the interaction relocalizes ESR1 from the nucleus to the cytoplasm. In the nucleus, interacts specifically with RELA (via RHD domain) and forms a dynamic complex with NF-kappa-B and is recruited to the NF-kappa-B enhanceosome upon stimulation. Interacts with MECOM. Interacts with URI1. Part of complex I composed of TNF-alpha receptor TNFRSF1A, TRADD, TRAF2 and RIPK1 formed in response to TNF-alpha stimulation. Within the complex, interacts (via TPQE motif) with TRAF2; the interaction prevents the recruitment of FADD and CASP8/caspase 8 to complex I. Ubiquitinated by E3 ubiquitin-protein ligase complex containing FBXO7; leading to proteasomal degradation. As to expression, ubiquitous. Expressed in prostate epithelial cells. Expressed in mammary epithelial cells. Highest levels in the heart, skeletal muscle, pancreas, kidney, liver, adrenal gland, peripheral blood leukocytes, lymph node, prostate, and thyroid and the lowest levels in bladder and uterus. Overexpressed in a number of tumor tissues.

It is found in the cytoplasm. The protein resides in the nucleus. Its subcellular location is the cytoskeleton. The protein localises to the microtubule organizing center. It localises to the centrosome. It is found in the spindle pole. Functionally, involved in gene transcription regulation. Acts in concert with the corepressor URI1 to regulate androgen receptor AR-mediated transcription. Together with URI1, associates with chromatin to the NKX3-1 promoter region. Negatively regulates the transcriptional activity of the estrogen receptor ESR1 by inducing its translocation into the cytoplasm. May act as nuclear chaperone that facilitates the formation of the NF-kappa-B enhanceosome and thus positively regulates NF-kappa-B transcription activity. Potential component of mitochondrial-associated LRPPRC, a multidomain organizer that potentially integrates mitochondria and the microtubular cytoskeleton with chromosome remodeling. Increasing concentrations of UXT contributes to progressive aggregation of mitochondria and cell death potentially through its association with LRPPRC. Suppresses cell transformation and it might mediate this function by interaction and inhibition of the biological activity of cell proliferation and survival stimulatory factors like MECOM. Plays a role in protecting cells against TNF-alpha-induced apoptosis by preventing the recruitment of FADD and caspase 8 to the apoptotic complex I, composed of TRADD, TRAF2 and RIPK1/RIP. This is Protein UXT (UXT) from Homo sapiens (Human).